The sequence spans 190 residues: Threonylcarbamoyl-AMP synthase (190 aa).

The YrdC-like domain maps to 7–190 (ADAISFIVDV…ALTGELFRQG (184 aa)).

This sequence belongs to the SUA5 family. TsaC subfamily.

Its subcellular location is the cytoplasm. It carries out the reaction L-threonine + hydrogencarbonate + ATP = L-threonylcarbamoyladenylate + diphosphate + H2O. Functionally, required for the formation of a threonylcarbamoyl group on adenosine at position 37 (t(6)A37) in tRNAs that read codons beginning with adenine. Catalyzes the conversion of L-threonine, HCO(3)(-)/CO(2) and ATP to give threonylcarbamoyl-AMP (TC-AMP) as the acyladenylate intermediate, with the release of diphosphate. In Cronobacter sakazakii (strain ATCC BAA-894) (Enterobacter sakazakii), this protein is Threonylcarbamoyl-AMP synthase.